The sequence spans 243 residues: Probable 6-phosphogluconolactonase (243 aa).

It belongs to the glucosamine/galactosamine-6-phosphate isomerase family. 6-phosphogluconolactonase subfamily.

The catalysed reaction is 6-phospho-D-glucono-1,5-lactone + H2O = 6-phospho-D-gluconate + H(+). Its pathway is carbohydrate degradation; pentose phosphate pathway; D-ribulose 5-phosphate from D-glucose 6-phosphate (oxidative stage): step 2/3. Functionally, hydrolysis of 6-phosphogluconolactone to 6-phosphogluconate. The protein is Probable 6-phosphogluconolactonase of Drosophila melanogaster (Fruit fly).